The following is a 398-amino-acid chain: Dual-specificity RNA methyltransferase RlmN (398 aa).

The active-site Proton acceptor is glutamate 121. The Radical SAM core domain occupies 127–370; the sequence is ETDRGTLCVS…VRTPRGRDIL (244 aa). A disulfide bridge connects residues cysteine 134 and cysteine 373. Residues cysteine 141, cysteine 145, and cysteine 148 each contribute to the [4Fe-4S] cluster site. S-adenosyl-L-methionine-binding positions include 199 to 200, serine 231, 253 to 255, and asparagine 330; these read GE and SLH. Cysteine 373 acts as the S-methylcysteine intermediate in catalysis.

The protein belongs to the radical SAM superfamily. RlmN family. It depends on [4Fe-4S] cluster as a cofactor.

The protein resides in the cytoplasm. The catalysed reaction is adenosine(2503) in 23S rRNA + 2 reduced [2Fe-2S]-[ferredoxin] + 2 S-adenosyl-L-methionine = 2-methyladenosine(2503) in 23S rRNA + 5'-deoxyadenosine + L-methionine + 2 oxidized [2Fe-2S]-[ferredoxin] + S-adenosyl-L-homocysteine. It catalyses the reaction adenosine(37) in tRNA + 2 reduced [2Fe-2S]-[ferredoxin] + 2 S-adenosyl-L-methionine = 2-methyladenosine(37) in tRNA + 5'-deoxyadenosine + L-methionine + 2 oxidized [2Fe-2S]-[ferredoxin] + S-adenosyl-L-homocysteine. In terms of biological role, specifically methylates position 2 of adenine 2503 in 23S rRNA and position 2 of adenine 37 in tRNAs. m2A2503 modification seems to play a crucial role in the proofreading step occurring at the peptidyl transferase center and thus would serve to optimize ribosomal fidelity. The protein is Dual-specificity RNA methyltransferase RlmN of Rhodopseudomonas palustris (strain BisB5).